We begin with the raw amino-acid sequence, 270 residues long: MEYIKKIALYMSVLLLIIFIGGCGNMKDEQKKEEQTNKTDSKEEQIKKSFAKTLDMYPIKNLEDLYDKEGYRDGEFKKGDKGTWTILTGFSKSNKPGVLDDEGMVLYLNRNAKKATGYYFVNKVYDDISKNHNEKKYRVELKNNKIVLLDNVEDKKLKQKIENFKFFSQYADFKDLKNYQDGNITTNENVPSYEAQYKMNNSDKNVKKLREIYPITTNNSPNLKLYIDGDIKGSSVGYKKIEYKFSKDKGQETTLRDYLNFGPSEGENVE.

Positions 1–22 (MEYIKKIALYMSVLLLIIFIGG) are cleaved as a signal peptide. The N-palmitoyl cysteine moiety is linked to residue Cys23. Residue Cys23 is the site of S-diacylglycerol cysteine attachment.

The protein belongs to the staphylococcal tandem lipoprotein family.

The protein resides in the cell membrane. This is an uncharacterized protein from Staphylococcus aureus (strain USA300).